The sequence spans 137 residues: ATP synthase epsilon chain (137 aa).

This sequence belongs to the ATPase epsilon chain family. As to quaternary structure, F-type ATPases have 2 components, CF(1) - the catalytic core - and CF(0) - the membrane proton channel. CF(1) has five subunits: alpha(3), beta(3), gamma(1), delta(1), epsilon(1). CF(0) has three main subunits: a, b and c.

Its subcellular location is the cell membrane. In terms of biological role, produces ATP from ADP in the presence of a proton gradient across the membrane. The chain is ATP synthase epsilon chain from Syntrophomonas wolfei subsp. wolfei (strain DSM 2245B / Goettingen).